The chain runs to 1368 residues: DNA-directed RNA polymerase subunit beta (1368 aa).

Belongs to the RNA polymerase beta chain family. As to quaternary structure, the RNAP catalytic core consists of 2 alpha, 1 beta, 1 beta' and 1 omega subunit. When a sigma factor is associated with the core the holoenzyme is formed, which can initiate transcription.

The enzyme catalyses RNA(n) + a ribonucleoside 5'-triphosphate = RNA(n+1) + diphosphate. Its function is as follows. DNA-dependent RNA polymerase catalyzes the transcription of DNA into RNA using the four ribonucleoside triphosphates as substrates. In Paraburkholderia xenovorans (strain LB400), this protein is DNA-directed RNA polymerase subunit beta.